A 352-amino-acid polypeptide reads, in one-letter code: MAIISSNIGDNDLPLRKKELRLVDSKIIPEEKRNNNLNLARPLTLKEFIGQEQLKSSLRIAIDASIFRKEPLEHILLYGQPGLGKTTLAFLIAHELNTKCKIATAPAIERPRDIVGLLLGLKEGEVLFIDEIHRLNRLTEELLYSAMEDFRLDLTMGANKGTRCRTINLPRFTLIGATTKLASISAPLRDRFGISQKIEFYNYDELKQILLNFSRLINLNLDDEASYDLAKISRGTPRIALRLLRRVRDYAQVVMKTNTISVNLIKKALNSYQIDDKGLDSLDRHYLSFINQNNNIPIGLDSIAAGLGDDSSMLEFVVEPYLIKIGFLTRTPRGRLLTALGKKYIDSKNDDF.

The segment at 13-201 (LPLRKKELRL…FGISQKIEFY (189 aa)) is large ATPase domain (RuvB-L). ATP is bound by residues Arg41, Gly82, Lys85, Thr86, Thr87, 148–150 (EDF), Arg191, Tyr201, and Arg238. Thr86 contacts Mg(2+). Positions 202-273 (NYDELKQILL…LIKKALNSYQ (72 aa)) are small ATPAse domain (RuvB-S). Residues 276 to 352 (DKGLDSLDRH…KYIDSKNDDF (77 aa)) are head domain (RuvB-H). Residues Arg330 and Arg335 each contribute to the DNA site.

This sequence belongs to the RuvB family. In terms of assembly, homohexamer. Forms an RuvA(8)-RuvB(12)-Holliday junction (HJ) complex. HJ DNA is sandwiched between 2 RuvA tetramers; dsDNA enters through RuvA and exits via RuvB. An RuvB hexamer assembles on each DNA strand where it exits the tetramer. Each RuvB hexamer is contacted by two RuvA subunits (via domain III) on 2 adjacent RuvB subunits; this complex drives branch migration. In the full resolvosome a probable DNA-RuvA(4)-RuvB(12)-RuvC(2) complex forms which resolves the HJ.

It is found in the cytoplasm. It catalyses the reaction ATP + H2O = ADP + phosphate + H(+). In terms of biological role, the RuvA-RuvB-RuvC complex processes Holliday junction (HJ) DNA during genetic recombination and DNA repair, while the RuvA-RuvB complex plays an important role in the rescue of blocked DNA replication forks via replication fork reversal (RFR). RuvA specifically binds to HJ cruciform DNA, conferring on it an open structure. The RuvB hexamer acts as an ATP-dependent pump, pulling dsDNA into and through the RuvAB complex. RuvB forms 2 homohexamers on either side of HJ DNA bound by 1 or 2 RuvA tetramers; 4 subunits per hexamer contact DNA at a time. Coordinated motions by a converter formed by DNA-disengaged RuvB subunits stimulates ATP hydrolysis and nucleotide exchange. Immobilization of the converter enables RuvB to convert the ATP-contained energy into a lever motion, pulling 2 nucleotides of DNA out of the RuvA tetramer per ATP hydrolyzed, thus driving DNA branch migration. The RuvB motors rotate together with the DNA substrate, which together with the progressing nucleotide cycle form the mechanistic basis for DNA recombination by continuous HJ branch migration. Branch migration allows RuvC to scan DNA until it finds its consensus sequence, where it cleaves and resolves cruciform DNA. This is Holliday junction branch migration complex subunit RuvB from Prochlorococcus marinus (strain MIT 9301).